The following is a 235-amino-acid chain: Isoprenyl transferase (235 aa).

The active site involves aspartate 21. Aspartate 21 serves as a coordination point for Mg(2+). Substrate-binding positions include glycine 22–arginine 25, tryptophan 26, lysine 34, histidine 38, and serine 66–glutamate 68. Residue asparagine 69 is the Proton acceptor of the active site. Substrate is bound by residues tryptophan 70, arginine 72, arginine 183, and arginine 189–serine 191. Mg(2+) is bound at residue glutamate 202.

The protein belongs to the UPP synthase family. As to quaternary structure, homodimer. The cofactor is Mg(2+).

Functionally, catalyzes the condensation of isopentenyl diphosphate (IPP) with allylic pyrophosphates generating different type of terpenoids. The chain is Isoprenyl transferase from Rickettsia felis (strain ATCC VR-1525 / URRWXCal2) (Rickettsia azadi).